The primary structure comprises 342 residues: S-methyl-5'-thioadenosine phosphorylase (342 aa).

Residues threonine 51, arginine 99–histidine 100, and serine 132–alanine 133 each bind phosphate. Methionine 234 is a substrate binding site. Serine 235 serves as a coordination point for phosphate. Aspartate 258–aspartate 260 provides a ligand contact to substrate.

Belongs to the PNP/MTAP phosphorylase family. MTAP subfamily. As to quaternary structure, homotrimer.

It is found in the cytoplasm. It localises to the nucleus. The enzyme catalyses S-methyl-5'-thioadenosine + phosphate = 5-(methylsulfanyl)-alpha-D-ribose 1-phosphate + adenine. Its pathway is amino-acid biosynthesis; L-methionine biosynthesis via salvage pathway; S-methyl-5-thio-alpha-D-ribose 1-phosphate from S-methyl-5'-thioadenosine (phosphorylase route): step 1/1. Catalyzes the reversible phosphorylation of S-methyl-5'-thioadenosine (MTA) to adenine and 5-methylthioribose-1-phosphate. Involved in the breakdown of MTA, a major by-product of polyamine biosynthesis. Responsible for the first step in the methionine salvage pathway after MTA has been generated from S-adenosylmethionine. Has broad substrate specificity with 6-aminopurine nucleosides as preferred substrates. This is S-methyl-5'-thioadenosine phosphorylase from Aspergillus fumigatus (strain ATCC MYA-4609 / CBS 101355 / FGSC A1100 / Af293) (Neosartorya fumigata).